A 309-amino-acid chain; its full sequence is F-box/LRR-repeat protein At3g48880 (309 aa).

Positions 10–57 constitute an F-box domain; sequence LRRWEELDTDILVRIFQKFSVFELTSGLAHVCRGWRAACCDPILWKTV. LRR repeat units lie at residues 77–107, 108–133, 159–184, and 208–233; these read VERR…IFHF, NLFL…VLPA, SIAN…KIMG, and CSAI…NISH.

This Arabidopsis thaliana (Mouse-ear cress) protein is F-box/LRR-repeat protein At3g48880.